We begin with the raw amino-acid sequence, 455 residues long: UDP-N-acetylmuramoylalanine--D-glutamate ligase (455 aa).

117–123 (GTNGKTT) is a binding site for ATP.

It belongs to the MurCDEF family.

It localises to the cytoplasm. It carries out the reaction UDP-N-acetyl-alpha-D-muramoyl-L-alanine + D-glutamate + ATP = UDP-N-acetyl-alpha-D-muramoyl-L-alanyl-D-glutamate + ADP + phosphate + H(+). It functions in the pathway cell wall biogenesis; peptidoglycan biosynthesis. Cell wall formation. Catalyzes the addition of glutamate to the nucleotide precursor UDP-N-acetylmuramoyl-L-alanine (UMA). The sequence is that of UDP-N-acetylmuramoylalanine--D-glutamate ligase from Pelotomaculum thermopropionicum (strain DSM 13744 / JCM 10971 / SI).